The sequence spans 393 residues: Lipoyl synthase, mitochondrial (393 aa).

Cysteine 111, cysteine 116, cysteine 122, cysteine 142, cysteine 146, cysteine 149, and serine 357 together coordinate [4Fe-4S] cluster. One can recognise a Radical SAM core domain in the interval 127 to 346; sequence EHGTQTATIM…ETRGNELGFL (220 aa).

Belongs to the radical SAM superfamily. Lipoyl synthase family. The cofactor is [4Fe-4S] cluster.

Its subcellular location is the mitochondrion. The enzyme catalyses [[Fe-S] cluster scaffold protein carrying a second [4Fe-4S](2+) cluster] + N(6)-octanoyl-L-lysyl-[protein] + 2 oxidized [2Fe-2S]-[ferredoxin] + 2 S-adenosyl-L-methionine + 4 H(+) = [[Fe-S] cluster scaffold protein] + N(6)-[(R)-dihydrolipoyl]-L-lysyl-[protein] + 4 Fe(3+) + 2 hydrogen sulfide + 2 5'-deoxyadenosine + 2 L-methionine + 2 reduced [2Fe-2S]-[ferredoxin]. It participates in protein modification; protein lipoylation via endogenous pathway; protein N(6)-(lipoyl)lysine from octanoyl-[acyl-carrier-protein]: step 2/2. In terms of biological role, catalyzes the radical-mediated insertion of two sulfur atoms into the C-6 and C-8 positions of the octanoyl moiety bound to the lipoyl domains of lipoate-dependent enzymes, thereby converting the octanoylated domains into lipoylated derivatives. In Aedes aegypti (Yellowfever mosquito), this protein is Lipoyl synthase, mitochondrial.